The following is a 535-amino-acid chain: Triacylglyceride transporter MHAS_02168/C731_2106 (535 aa).

Over 1-18 (MAFPQTPNRLIRPRRTSR) the chain is Cytoplasmic. A helical transmembrane segment spans residues 19–39 (GIAISAGGLAVLLGALDTYVV). At 40–60 (VSIVTDIMRDVGIAVNQIQRV) the chain is on the periplasmic side. Residues 61–82 (TPIITGYLLGYIAAMPLLGRAS) form a helical membrane-spanning segment. The Cytoplasmic portion of the chain corresponds to 83–86 (DRFG). The helical transmembrane segment at 87-107 (RKLLIQISLAGFALGSVITAL) threads the bilayer. The Periplasmic segment spans residues 108 to 111 (ATNL). The helical transmembrane segment at 112–136 (DVLVAGRVIQGAASGALLPVTLALA) threads the bilayer. Over 137 to 145 (ADLWATHKR) the chain is Cytoplasmic. Residues 146 to 167 (AAVLGGVGAAQELGAVLGPIYG) form a helical membrane-spanning segment. Topologically, residues 168-177 (IFVVWLFHHW) are periplasmic. A helical membrane pass occupies residues 178–198 (QAVFWVNVPLALIAMVLIHIS). The Cytoplasmic portion of the chain corresponds to 199 to 212 (LPPRVRTEEPQRVD). The chain crosses the membrane as a helical span at residues 213–230 (VTGGLLLALALGLATIGL). The Periplasmic portion of the chain corresponds to 231 to 243 (YNAEPDGKQVLPE). The chain crosses the membrane as a helical span at residues 244–263 (YGPPLIIGAVIAAVAFLVWE). Residues 264–278 (RFARTRLLDPAGVRF) are Cytoplasmic-facing. Residues 279–300 (RPFLIALLVSLVTGGALMVTLV) form a helical membrane-spanning segment. Residues 301 to 320 (NVELFGQGVLGLDQDEAVFL) are Periplasmic-facing. 2 consecutive transmembrane segments (helical) span residues 321 to 343 (LARF…TRVG) and 344 to 364 (DRAV…LIAQ). The Periplasmic segment spans residues 365 to 384 (WPADVLESRHDLGFVSLPTL). The segment at 373 to 382 (RHDLGFVSLP) is beta-hairpin. Residues 385-407 (DTDLAIAGFGLGLVIAPLTSAAL) traverse the membrane as a helical segment. Residues 408–415 (RVVPAAQH) lie on the Cytoplasmic side of the membrane. The helical transmembrane segment at 416-440 (GIASAAVVVARMIGMLIGIAALSAW) threads the bilayer. At 441–487 (GLYRFNQYLKEQLAALPPAPADFPGGQMAGQMMRLRTATVQAYVLQY) the chain is on the periplasmic side. Residues 488–507 (GEIFAITAGLCVFGAVLGLF) form a helical membrane-spanning segment. The Cytoplasmic segment spans residues 508 to 535 (IAGRREHAEESADAVDGVSNARDRAPSA).

It belongs to the major facilitator superfamily. P55 (TC 2.A.1.3.34) family.

Its subcellular location is the cell inner membrane. In terms of biological role, in association with lipoprotein LprG transports triacylglycerides (TAG) across the inner cell membrane, probably transfering them to lipoprotein LprG in the periplasm. TAG probably regulates lipid metabolism and growth regulation and plays a structural role in the outer membrane. Mutagenesis and molecular modeling suggests TAG (and maybe other lipids) enters the central cavity of the P55 transporter from within the cell inner membrane via clefts on the cytoplasmic face of P55 between TM5-TM8 and TM2-TM11. From there the lipid is probably transferred to the hydrophobic cavity of LprG. The lprG-MHAS_02167/C731_2107 operon complements the vancomycin sensitivity of an M.smegmatis knockout of the same operon. Probably required with LprG for normal surface localization of lipoarabinomannan (LAM). The chain is Triacylglyceride transporter MHAS_02168/C731_2106 from Mycolicibacterium hassiacum (strain DSM 44199 / CIP 105218 / JCM 12690 / 3849) (Mycobacterium hassiacum).